Reading from the N-terminus, the 91-residue chain is C-C motif chemokine 5 (91 aa).

Positions 1–23 (MKISAAALTIILTAAALCTPAPA) are cleaved as a signal peptide. 2 cysteine pairs are disulfide-bonded: Cys-33–Cys-57 and Cys-34–Cys-73.

Belongs to the intercrine beta (chemokine CC) family. As to expression, T-cell and macrophage specific.

It localises to the secreted. Chemoattractant for blood monocytes, memory T-helper cells and eosinophils. Causes the release of histamine from basophils and activates eosinophils. May activate several chemokine receptors including CCR1, CCR3, CCR4 and CCR5. May also be an agonist of the G protein-coupled receptor GPR75. Together with GPR75, may play a role in neuron survival through activation of a downstream signaling pathway involving the PI3, Akt and MAP kinases. By activating GPR75 may also play a role in insulin secretion by islet cells. The polypeptide is C-C motif chemokine 5 (Ccl5) (Mus musculus (Mouse)).